The primary structure comprises 287 residues: Nucleotide-binding protein mma_3120 (287 aa).

Residue 8–15 coordinates ATP; it reads GISGSGKS. GTP is bound at residue 57 to 60; it reads DARS.

Belongs to the RapZ-like family.

Functionally, displays ATPase and GTPase activities. This is Nucleotide-binding protein mma_3120 from Janthinobacterium sp. (strain Marseille) (Minibacterium massiliensis).